The chain runs to 620 residues: Protein translocase subunit SecD (620 aa).

Helical transmembrane passes span 10–30 (YLLI…NLYP), 464–484 (LWGM…FGVI), 488–507 (ALAF…GATL), 511–533 (GIAG…FSRI), 555–575 (FTAI…LYAM), and 582–602 (GFAV…IMVT).

It belongs to the SecD/SecF family. SecD subfamily. In terms of assembly, forms a complex with SecF. Part of the essential Sec protein translocation apparatus which comprises SecA, SecYEG and auxiliary proteins SecDF-YajC and YidC.

Its subcellular location is the cell inner membrane. Functionally, part of the Sec protein translocase complex. Interacts with the SecYEG preprotein conducting channel. SecDF uses the proton motive force (PMF) to complete protein translocation after the ATP-dependent function of SecA. The chain is Protein translocase subunit SecD from Pseudomonas aeruginosa (strain ATCC 15692 / DSM 22644 / CIP 104116 / JCM 14847 / LMG 12228 / 1C / PRS 101 / PAO1).